The chain runs to 1534 residues: Alpha-2-macroglobulin homolog (1534 aa).

Positions 1 to 38 are cleaved as a signal peptide; it reads MDTQRFQSQFHWHLSFKFSGAIAACLSLSLVGTGLANA.

This sequence belongs to the protease inhibitor I39 (alpha-2-macroglobulin) family. Bacterial alpha-2-macroglobulin subfamily.

The chain is Alpha-2-macroglobulin homolog (yfaS) from Escherichia coli O157:H7.